Consider the following 591-residue polypeptide: Aspartate--tRNA ligase (591 aa).

An L-aspartate-binding site is contributed by Glu-171. Residues 195-198 (QLFK) form an aspartate region. Residue Arg-217 coordinates L-aspartate. Residues 217 to 219 (RDE) and Gln-226 each bind ATP. His-448 is a binding site for L-aspartate. Glu-482 contributes to the ATP binding site. Arg-489 provides a ligand contact to L-aspartate. 534–537 (GLDR) contacts ATP.

Belongs to the class-II aminoacyl-tRNA synthetase family. Type 1 subfamily. As to quaternary structure, homodimer.

The protein resides in the cytoplasm. It carries out the reaction tRNA(Asp) + L-aspartate + ATP = L-aspartyl-tRNA(Asp) + AMP + diphosphate. Catalyzes the attachment of L-aspartate to tRNA(Asp) in a two-step reaction: L-aspartate is first activated by ATP to form Asp-AMP and then transferred to the acceptor end of tRNA(Asp). The sequence is that of Aspartate--tRNA ligase from Vibrio cholerae serotype O1 (strain ATCC 39541 / Classical Ogawa 395 / O395).